A 357-amino-acid polypeptide reads, in one-letter code: MEQKQRRFTKNIFVLDVTAKTLCGAIAKLSSQPYCQIKIGRVVAFKPVKNPEPKGYVLNVPGPGAYRIQDGQDIISLMLTPHGVEATTERWEEWKFEGVSVTPMATRVQYNGVMVDAEIKYCKGMGIVQPYMRNDFDRNEMPDLPGVMRSNYDIRELRQKIKNERESAPRLQVHSVAPREESRWMDDDEAKVDDEAKEIVPGTSGLEKLREARSNVFKEVEAVINWNLDERDEGDRDERGDEEQVKTLSDDDDQGEDASDDEHPKTHITKEYIEKVAKQIKLKDERFMSLSSAMPQASGGFDRMIVTKKLKWQNVPLYCFDESLKRYELQCVGACERVAFVSKDMSLIICRSAFRRL.

2 disordered regions span residues Pro169–Lys191 and Asp229–Thr266. A compositionally biased stretch (basic and acidic residues) spans Glu233–Ser249. Acidic residues predominate over residues Asp250–Asp260.

This sequence belongs to the orbivirus non-structural protein NS2 family.

Functionally, single-stranded RNA-binding protein. This is Non-structural protein NS2 (Segment-8) from Antilocapra americana (Pronghorn).